We begin with the raw amino-acid sequence, 668 residues long: Golgin subfamily A member 6-like protein 1 (668 aa).

Disordered regions lie at residues 1–120, 323–356, 384–466, 481–591, and 603–639; these read MLMW…HQEA, IREQ…RQEE, EKMH…EMWR, KEKM…REQE, and EQEE…MRRQ. The span at 15 to 41 shows a compositional bias: basic residues; it reads LPTHPHLPTHPHLPTHPHLPTHPHLPT. Residues 51–72 show a composition bias toward basic and acidic residues; sequence MSKETRQSKLAEAKEQLTDHHP. 2 stretches are compositionally biased toward polar residues: residues 73-83 and 91-103; these read QTNPSVGTAAS and NNGT…TSGG. The span at 106 to 120 shows a compositional bias: basic and acidic residues; that stretch reads SPEDEQKASHQHQEA. Residues 177 to 663 are a coiled coil; that stretch reads LEQALSAVAT…EEKMQEHQEH (487 aa).

Belongs to the GOLGA6 family.

The chain is Golgin subfamily A member 6-like protein 1 (GOLGA6L1) from Homo sapiens (Human).